The primary structure comprises 101 residues: Ubiquitin-related modifier 1 homolog (101 aa).

Glycine 101 carries the post-translational modification 1-thioglycine. Glycine 101 is covalently cross-linked (Glycyl lysine isopeptide (Gly-Lys) (interchain with K-? in acceptor proteins)).

Belongs to the URM1 family. As to quaternary structure, interacts with cer. In terms of processing, C-terminal thiocarboxylation occurs in 2 steps, it is first acyl-adenylated (-COAMP) via the hesA/moeB/thiF part of the MOCS3 homolog, then thiocarboxylated (-COSH) via the rhodanese domain of the MOCS3 homolog.

The protein localises to the cytoplasm. It functions in the pathway tRNA modification; 5-methoxycarbonylmethyl-2-thiouridine-tRNA biosynthesis. Functionally, acts as a sulfur carrier required for 2-thiolation of mcm(5)S(2)U at tRNA wobble positions of cytosolic tRNA(Lys), tRNA(Glu) and tRNA(Gln). Serves as sulfur donor in tRNA 2-thiolation reaction by being thiocarboxylated (-COSH) at its C-terminus by MOCS3. The sulfur is then transferred to tRNA to form 2-thiolation of mcm(5)S(2)U. Also acts as a ubiquitin-like protein (UBL) that is covalently conjugated via an isopeptide bond to lysine residues of target proteins such as Prx2/Jafrac1, Ciao1, Eip71CD and GILT1. The thiocarboxylated form serves as substrate for conjugation and oxidative stress specifically induces the formation of UBL-protein conjugates. The polypeptide is Ubiquitin-related modifier 1 homolog (Drosophila ananassae (Fruit fly)).